Consider the following 549-residue polypeptide: Movement protein Hsp70h (549 aa).

It belongs to the heat shock protein 70 family.

The protein resides in the virion. Its function is as follows. Transports viral genome to neighboring plant cells directly through plasmosdesmata, without any budding. The movement protein allows efficient cell to cell propagation, by bypassing the host cell wall barrier. Two movement proteins, p6, Hsp70h and three structural proteins, CP, CPm, and P64 are essential for cell-cell movement. Also plays a role in virion formation. Together with CPm and p64, encapsidates the 5'-terminal portion of the viral genome. This is Movement protein Hsp70h from Vitis vinifera (Grape).